We begin with the raw amino-acid sequence, 114 residues long: Iron-sulfur cluster insertion protein ErpA (114 aa).

Iron-sulfur cluster-binding residues include C42, C106, and C108.

It belongs to the HesB/IscA family. As to quaternary structure, homodimer. The cofactor is iron-sulfur cluster.

Functionally, required for insertion of 4Fe-4S clusters for at least IspG. This is Iron-sulfur cluster insertion protein ErpA from Enterobacter sp. (strain 638).